The primary structure comprises 388 residues: Succinate--CoA ligase [ADP-forming] subunit beta (388 aa).

Residues 9–245 enclose the ATP-grasp domain; the sequence is KELLAKYGLP…KSQENERELK (237 aa). Residues K46, 53–55, E100, Y103, and E108 contribute to the ATP site; that span reads GRG. Mg(2+)-binding residues include N200 and D214. Residues N265 and 322-324 each bind substrate; that span reads GIV.

This sequence belongs to the succinate/malate CoA ligase beta subunit family. As to quaternary structure, heterotetramer of two alpha and two beta subunits. The cofactor is Mg(2+).

It carries out the reaction succinate + ATP + CoA = succinyl-CoA + ADP + phosphate. It catalyses the reaction GTP + succinate + CoA = succinyl-CoA + GDP + phosphate. It functions in the pathway carbohydrate metabolism; tricarboxylic acid cycle; succinate from succinyl-CoA (ligase route): step 1/1. Functionally, succinyl-CoA synthetase functions in the citric acid cycle (TCA), coupling the hydrolysis of succinyl-CoA to the synthesis of either ATP or GTP and thus represents the only step of substrate-level phosphorylation in the TCA. The beta subunit provides nucleotide specificity of the enzyme and binds the substrate succinate, while the binding sites for coenzyme A and phosphate are found in the alpha subunit. The chain is Succinate--CoA ligase [ADP-forming] subunit beta from Laribacter hongkongensis (strain HLHK9).